Reading from the N-terminus, the 342-residue chain is S-adenosylmethionine:tRNA ribosyltransferase-isomerase (342 aa).

Belongs to the QueA family. As to quaternary structure, monomer.

It is found in the cytoplasm. The catalysed reaction is 7-aminomethyl-7-carbaguanosine(34) in tRNA + S-adenosyl-L-methionine = epoxyqueuosine(34) in tRNA + adenine + L-methionine + 2 H(+). Its pathway is tRNA modification; tRNA-queuosine biosynthesis. Its function is as follows. Transfers and isomerizes the ribose moiety from AdoMet to the 7-aminomethyl group of 7-deazaguanine (preQ1-tRNA) to give epoxyqueuosine (oQ-tRNA). This chain is S-adenosylmethionine:tRNA ribosyltransferase-isomerase, found in Novosphingobium aromaticivorans (strain ATCC 700278 / DSM 12444 / CCUG 56034 / CIP 105152 / NBRC 16084 / F199).